A 163-amino-acid polypeptide reads, in one-letter code: Probable histone H2A.4 (163 aa).

Disordered regions lie at residues 1-30 (MEVG…VSRS) and 134-163 (SAAA…AAAA). The segment covering 12-21 (GAGGRRGGGG) has biased composition (gly residues). Over residues 147–163 (KSPKKATTKSPKKAAAA) the composition is skewed to basic residues. 2 short sequence motifs (SPKK motif) span residues 148–151 (SPKK) and 156–159 (SPKK).

It belongs to the histone H2A family. The nucleosome is a histone octamer containing two molecules each of H2A, H2B, H3 and H4 assembled in one H3-H4 heterotetramer and two H2A-H2B heterodimers. The octamer wraps approximately 147 bp of DNA.

It localises to the nucleus. Its subcellular location is the chromosome. Core component of nucleosome. Nucleosomes wrap and compact DNA into chromatin, limiting DNA accessibility to the cellular machineries which require DNA as a template. Histones thereby play a central role in transcription regulation, DNA repair, DNA replication and chromosomal stability. DNA accessibility is regulated via a complex set of post-translational modifications of histones, also called histone code, and nucleosome remodeling. The polypeptide is Probable histone H2A.4 (Oryza sativa subsp. indica (Rice)).